The sequence spans 346 residues: Low-temperature-induced cysteine proteinase (346 aa).

Residues 1–17 (KLSKNKSDRYLPKVGDS) constitute a propeptide, activation peptide. Intrachain disulfides connect C39/C81, C73/C114, C172/C223, C256/C268, and C262/C283. Residue C42 is part of the active site. Catalysis depends on residues H178 and N198. A glycan (N-linked (GlcNAc...) asparagine) is linked at N215. Positions 238–346 (NPPKPAPSPP…FGNGGKKSSS (109 aa)) are cleaved as a propeptide — removed in mature form.

The protein belongs to the peptidase C1 family.

This Solanum lycopersicum (Tomato) protein is Low-temperature-induced cysteine proteinase.